The primary structure comprises 968 residues: RNA polymerase-associated protein RapA (968 aa).

Residues 164–334 (DVGRRHAPRV…FARLRLLDPN (171 aa)) form the Helicase ATP-binding domain. Position 177 to 184 (177 to 184 (DEVGLGKT)) interacts with ATP. Residues 280 to 283 (DEAH) carry the DEAH box motif. A Helicase C-terminal domain is found at 490 to 685 (RVEWLMGYLT…ALKAQLEQGR (196 aa)).

The protein belongs to the SNF2/RAD54 helicase family. RapA subfamily. As to quaternary structure, interacts with the RNAP. Has a higher affinity for the core RNAP than for the holoenzyme. Its ATPase activity is stimulated by binding to RNAP.

Functionally, transcription regulator that activates transcription by stimulating RNA polymerase (RNAP) recycling in case of stress conditions such as supercoiled DNA or high salt concentrations. Probably acts by releasing the RNAP, when it is trapped or immobilized on tightly supercoiled DNA. Does not activate transcription on linear DNA. Probably not involved in DNA repair. The chain is RNA polymerase-associated protein RapA from Salmonella newport (strain SL254).